We begin with the raw amino-acid sequence, 813 residues long: Phenylalanine--tRNA ligase beta subunit (813 aa).

Positions 42 to 151 (AKDFNHVVIG…ADAPVGKAYA (110 aa)) constitute a tRNA-binding domain. One can recognise a B5 domain in the interval 405–480 (VKKAPVDITI…RLNGYEHIPE (76 aa)). Mg(2+) contacts are provided by Asp458, Asp464, Glu467, and Glu468. An FDX-ACB domain is found at 720-813 (SKFPIVERDF…LKKNFDLSVR (94 aa)).

This sequence belongs to the phenylalanyl-tRNA synthetase beta subunit family. Type 1 subfamily. In terms of assembly, tetramer of two alpha and two beta subunits. Requires Mg(2+) as cofactor.

The protein resides in the cytoplasm. The catalysed reaction is tRNA(Phe) + L-phenylalanine + ATP = L-phenylalanyl-tRNA(Phe) + AMP + diphosphate + H(+). The protein is Phenylalanine--tRNA ligase beta subunit of Bdellovibrio bacteriovorus (strain ATCC 15356 / DSM 50701 / NCIMB 9529 / HD100).